The primary structure comprises 467 residues: tRNA modification GTPase MnmE (467 aa).

3 residues coordinate (6S)-5-formyl-5,6,7,8-tetrahydrofolate: arginine 27, glutamate 89, and arginine 128. Positions 225 to 387 (GISMVIAGRP…LKQAIFTVVT (163 aa)) constitute a TrmE-type G domain. Asparagine 235 contributes to the K(+) binding site. GTP contacts are provided by residues 235–240 (NVGKSS), 254–260 (TSIAGTT), 279–282 (DTAG), and 368–370 (SAR). Serine 239 lines the Mg(2+) pocket. Threonine 254, isoleucine 256, and threonine 259 together coordinate K(+). Threonine 260 is a Mg(2+) binding site. Lysine 467 contributes to the (6S)-5-formyl-5,6,7,8-tetrahydrofolate binding site.

The protein belongs to the TRAFAC class TrmE-Era-EngA-EngB-Septin-like GTPase superfamily. TrmE GTPase family. In terms of assembly, homodimer. Heterotetramer of two MnmE and two MnmG subunits. K(+) serves as cofactor.

It is found in the cytoplasm. Its function is as follows. Exhibits a very high intrinsic GTPase hydrolysis rate. Involved in the addition of a carboxymethylaminomethyl (cmnm) group at the wobble position (U34) of certain tRNAs, forming tRNA-cmnm(5)s(2)U34. The chain is tRNA modification GTPase MnmE from Desulfotalea psychrophila (strain LSv54 / DSM 12343).